We begin with the raw amino-acid sequence, 542 residues long: Importin subunit alpha-1 (542 aa).

The tract at residues 1–29 (MSASSRFIPEHRRQNYKGKGTFQADELRR) is disordered. Residues 1 to 60 (MSASSRFIPEHRRQNYKGKGTFQADELRRRRETQQIEIRKQKREENLNKRRNLVDVQEPA) form the IBB domain. 8 ARM repeats span residues 114–155 (IQKV…SSNQ), 156–197 (THVV…SPMC), 198–240 (RDHV…KNPQ), 241–282 (PDWN…ANEK), 283–324 (IQAI…DDVQ), 325–366 (TQVI…NSSQ), 367–408 (IQYV…GARR), and 409–453 (PDQI…GELD).

The protein belongs to the importin alpha family. In terms of assembly, interacts with pap1.

The protein localises to the nucleus. Binds specifically and directly to substrates containing either a simple or bipartite NLS motif. Promotes docking of import substrates to the nuclear envelope. Seems to act as a cytosolic receptor for both simple and bipartite NLS motifs. Has an essential role in mitotic chromosome condensation. Involved in nuclear protein import. Required for efficient nuclear import of both an SV40 nuclear localization signal-containing reporter protein and the pap1 component of the stress response MAP kinase pathway. Required for proper mitotic progression. The polypeptide is Importin subunit alpha-1 (cut15) (Schizosaccharomyces pombe (strain 972 / ATCC 24843) (Fission yeast)).